We begin with the raw amino-acid sequence, 736 residues long: Gingipain R2 (736 aa).

A signal peptide spans 1 to 24 (MKKNFSRIVSIVAFSSLLGGMAFA). Residues 25–229 (QPAERGRNPQ…SVFMNYEATR (205 aa)) constitute a propeptide that is removed on maturation. Ca(2+)-binding residues include Asp-307, Val-329, Asp-332, Tyr-334, Glu-336, Glu-390, and His-395. Residue His-440 is the Proton donor of the active site. The Nucleophile role is filled by Cys-473. The Ca(2+) site is built by Phe-478, Glu-487, Asp-521, Glu-522, Glu-525, His-531, Asp-613, and Glu-639.

The protein belongs to the peptidase C25 family.

The protein localises to the secreted. The enzyme catalyses Hydrolysis of proteins and small molecule substrates, with a preference for Arg in P1.. In terms of biological role, thiol protease. Acts synergistically with RgpA to catalyze the maturation of fimbrial subunits, such as FimA. Its proteolytic activity is a major factor in both periodontal tissue destruction and in evasion of host defense mechanisms. This is Gingipain R2 from Porphyromonas gingivalis (strain ATCC 33277 / DSM 20709 / CIP 103683 / JCM 12257 / NCTC 11834 / 2561).